A 294-amino-acid chain; its full sequence is Phosphatidylinositol transfer protein SFH5 (294 aa).

The CRAL-TRIO domain maps to 100-266 (HNTELQNVGI…GYGGKDKKNN (167 aa)). Tyrosine 128, arginine 148, histidine 173, tyrosine 175, and lysine 209 together coordinate heme.

It belongs to the SFH5 family. The cofactor is heme b.

The protein resides in the cytoplasm. It localises to the endoplasmic reticulum membrane. The protein localises to the microsome membrane. The enzyme catalyses a 1,2-diacyl-sn-glycero-3-phospho-(1D-myo-inositol)(in) = a 1,2-diacyl-sn-glycero-3-phospho-(1D-myo-inositol)(out). Functionally, non-classical phosphatidylinositol (PtdIns) transfer protein (PITP), which exhibits PtdIns-binding/transfer activity in the absence of detectable PtdCho-binding/transfer activity. Regulates PtdIns(4,5)P2 homeostasis at the plasma membrane. Heme-binding protein that may play a role in organic oxidant-induced stress responses. This Saccharomyces cerevisiae (strain YJM789) (Baker's yeast) protein is Phosphatidylinositol transfer protein SFH5 (SFH5).